Here is a 205-residue protein sequence, read N- to C-terminus: MSVVFVAASKLPTPFGEFTMHGFLDEESGKEHVALSMGDIADGAPVLGRLHSECLTGDALFSLRCDCGFQLEGALAAIAEEGRGVLLYLRQEGRGIGLLNKIRAYELQDGGADTVEANLQLGFGADQRDYAMCQPMLAHLGVSSLRLMTNNPRKVKALESYAITVAERVPLQRGLNKHNRRYLATKAGKLGHMLGSLHQGEAETT.

49-53 (RLHSE) is a GTP binding site. Zn(2+) contacts are provided by cysteine 54, cysteine 65, and cysteine 67. GTP is bound by residues glutamine 70, 92-94 (EGR), and threonine 114. Aspartate 126 serves as the catalytic Proton acceptor. Arginine 128 acts as the Nucleophile in catalysis. Positions 149 and 154 each coordinate GTP.

Belongs to the GTP cyclohydrolase II family. The cofactor is Zn(2+).

The enzyme catalyses GTP + 4 H2O = 2,5-diamino-6-hydroxy-4-(5-phosphoribosylamino)-pyrimidine + formate + 2 phosphate + 3 H(+). It participates in cofactor biosynthesis; riboflavin biosynthesis; 5-amino-6-(D-ribitylamino)uracil from GTP: step 1/4. Its function is as follows. Catalyzes the conversion of GTP to 2,5-diamino-6-ribosylamino-4(3H)-pyrimidinone 5'-phosphate (DARP), formate and pyrophosphate. In Pseudomonas aeruginosa (strain UCBPP-PA14), this protein is GTP cyclohydrolase-2.